Consider the following 131-residue polypeptide: UPF0342 protein DSY1594 (131 aa).

It belongs to the UPF0342 family.

This chain is UPF0342 protein DSY1594, found in Desulfitobacterium hafniense (strain Y51).